The sequence spans 108 residues: Small ribosomal subunit protein uS17 (108 aa).

This sequence belongs to the universal ribosomal protein uS17 family. As to quaternary structure, part of the 30S ribosomal subunit.

In terms of biological role, one of the primary rRNA binding proteins, it binds specifically to the 5'-end of 16S ribosomal RNA. The polypeptide is Small ribosomal subunit protein uS17 (Methanoregula boonei (strain DSM 21154 / JCM 14090 / 6A8)).